The chain runs to 637 residues: Chaperone protein DnaK (637 aa).

Residue threonine 198 is modified to Phosphothreonine; by autocatalysis. Positions 597–637 (MYQQQAEGDAARDAAQDAAKDDVVDAEFTEVDDDKNDKKSA) are disordered. Basic and acidic residues predominate over residues 605 to 619 (DAARDAAQDAAKDDV). Residues 620 to 630 (VDAEFTEVDDD) show a composition bias toward acidic residues.

The protein belongs to the heat shock protein 70 family.

Functionally, acts as a chaperone. This Afipia carboxidovorans (strain ATCC 49405 / DSM 1227 / KCTC 32145 / OM5) (Oligotropha carboxidovorans) protein is Chaperone protein DnaK.